A 327-amino-acid polypeptide reads, in one-letter code: UDP-N-acetylenolpyruvoylglucosamine reductase (327 aa).

Residues 42-223 (RTGGLAELFY…RAAMDEVALH (182 aa)) enclose the FAD-binding PCMH-type domain. Arg188 is a catalytic residue. Ser237 (proton donor) is an active-site residue. Residue Glu307 is part of the active site.

This sequence belongs to the MurB family. Requires FAD as cofactor.

It is found in the cytoplasm. It carries out the reaction UDP-N-acetyl-alpha-D-muramate + NADP(+) = UDP-N-acetyl-3-O-(1-carboxyvinyl)-alpha-D-glucosamine + NADPH + H(+). It functions in the pathway cell wall biogenesis; peptidoglycan biosynthesis. Functionally, cell wall formation. The chain is UDP-N-acetylenolpyruvoylglucosamine reductase from Bartonella tribocorum (strain CIP 105476 / IBS 506).